A 181-amino-acid polypeptide reads, in one-letter code: Sporozoite-associated mosquito saliva protein 1 (181 aa).

A signal peptide spans 1–24 (MNSSWRVVVFLGLVILCHSRRARA).

As to expression, salivary gland (at protein level). In terms of tissue distribution, (Microbial infection) Detected with Plasmodium berghei sporozoites isolated from the saliva of infected Anopheles gambiae mosquitoes (at protein level).

The protein resides in the secreted. In terms of biological role, decreases host neutrophil chemotaxis induced by N-formylmethionine-leucyl-phenylalanine (fMLP). Functionally, (Microbial infection) Interacts with the surface of Plasmodium berghei sporozoites. Enhances sporozoite gliding activity. Enhances host hepatocyte traversal by sporozoites. The chain is Sporozoite-associated mosquito saliva protein 1 from Anopheles gambiae (African malaria mosquito).